A 253-amino-acid chain; its full sequence is Triosephosphate isomerase (253 aa).

Substrate is bound at residue 9-11; the sequence is NWK. H96 (electrophile) is an active-site residue. Residue E169 is the Proton acceptor of the active site. Substrate contacts are provided by residues G175, S215, and 236 to 237; that span reads GG.

The protein belongs to the triosephosphate isomerase family. As to quaternary structure, homodimer.

It localises to the cytoplasm. The enzyme catalyses D-glyceraldehyde 3-phosphate = dihydroxyacetone phosphate. It functions in the pathway carbohydrate biosynthesis; gluconeogenesis. Its pathway is carbohydrate degradation; glycolysis; D-glyceraldehyde 3-phosphate from glycerone phosphate: step 1/1. Involved in the gluconeogenesis. Catalyzes stereospecifically the conversion of dihydroxyacetone phosphate (DHAP) to D-glyceraldehyde-3-phosphate (G3P). The protein is Triosephosphate isomerase of Borreliella burgdorferi (strain ZS7) (Borrelia burgdorferi).